A 369-amino-acid chain; its full sequence is Flagellar P-ring protein (369 aa).

The N-terminal stretch at 1-22 (MIKLKQLIAATLLLSTAFGVHA) is a signal peptide.

The protein belongs to the FlgI family. The basal body constitutes a major portion of the flagellar organelle and consists of four rings (L,P,S, and M) mounted on a central rod.

The protein localises to the periplasm. Its subcellular location is the bacterial flagellum basal body. Assembles around the rod to form the L-ring and probably protects the motor/basal body from shearing forces during rotation. In Pseudomonas syringae pv. syringae (strain B728a), this protein is Flagellar P-ring protein.